The chain runs to 238 residues: 2-C-methyl-D-erythritol 4-phosphate cytidylyltransferase (238 aa).

It belongs to the IspD/TarI cytidylyltransferase family. IspD subfamily.

The enzyme catalyses 2-C-methyl-D-erythritol 4-phosphate + CTP + H(+) = 4-CDP-2-C-methyl-D-erythritol + diphosphate. Its pathway is isoprenoid biosynthesis; isopentenyl diphosphate biosynthesis via DXP pathway; isopentenyl diphosphate from 1-deoxy-D-xylulose 5-phosphate: step 2/6. Its function is as follows. Catalyzes the formation of 4-diphosphocytidyl-2-C-methyl-D-erythritol from CTP and 2-C-methyl-D-erythritol 4-phosphate (MEP). The sequence is that of 2-C-methyl-D-erythritol 4-phosphate cytidylyltransferase from Aliivibrio fischeri (strain ATCC 700601 / ES114) (Vibrio fischeri).